The following is a 214-amino-acid chain: Pyridoxine/pyridoxamine 5'-phosphate oxidase (214 aa).

Substrate is bound by residues 9-12 (RKDY) and Lys-67. FMN-binding positions include 62–67 (RMVLLK), 77–78 (FT), Arg-83, Lys-84, and Gln-106. Substrate contacts are provided by Tyr-124, Arg-128, and Ser-132. Residues 141 to 142 (QS) and Trp-186 each bind FMN. 192 to 194 (RLH) serves as a coordination point for substrate. An FMN-binding site is contributed by Arg-196.

This sequence belongs to the pyridoxamine 5'-phosphate oxidase family. Homodimer. FMN serves as cofactor.

It carries out the reaction pyridoxamine 5'-phosphate + O2 + H2O = pyridoxal 5'-phosphate + H2O2 + NH4(+). The enzyme catalyses pyridoxine 5'-phosphate + O2 = pyridoxal 5'-phosphate + H2O2. The protein operates within cofactor metabolism; pyridoxal 5'-phosphate salvage; pyridoxal 5'-phosphate from pyridoxamine 5'-phosphate: step 1/1. Its pathway is cofactor metabolism; pyridoxal 5'-phosphate salvage; pyridoxal 5'-phosphate from pyridoxine 5'-phosphate: step 1/1. Catalyzes the oxidation of either pyridoxine 5'-phosphate (PNP) or pyridoxamine 5'-phosphate (PMP) into pyridoxal 5'-phosphate (PLP). The sequence is that of Pyridoxine/pyridoxamine 5'-phosphate oxidase from Trichormus variabilis (strain ATCC 29413 / PCC 7937) (Anabaena variabilis).